Consider the following 428-residue polypeptide: Nucleotidyltransferase MB21D2 (428 aa).

The interval glutamine 366–aspartate 389 is disordered. A compositionally biased stretch (polar residues) spans arginine 368 to serine 379. A Phosphothreonine modification is found at threonine 372. Phosphoserine is present on residues serine 373, serine 376, and serine 379.

It belongs to the mab-21 family.

Probable nucleotidyltransferase that catalyzes the formation of cyclic dinucleotide second messenger in response to some unknown stimulus. This Mus musculus (Mouse) protein is Nucleotidyltransferase MB21D2.